The chain runs to 660 residues: MESFSALAPDPLYPEKESERHANKLEAWGTAVLRWLSRKRRQPLWRTRRILKQVHAEAALLAGLDLAGVRARADEVAFELRCDGITQASAARAFALVRQAGKLALGKAHFDVQLLGGWAMLQGMVAEMNTGEGKTLTATLPAATAALAGLPVHVITTNDYLVERDAQIMSPLYEALGLTVRWVSMDMEPAQRRLAYQADIVYCSNKTLVFDYLRDLIVLDDDKDEDRLRLERLRGGSGRLSELFLRGLCFAIVDEADSVLVDEARTPLIISGSQKEDGGAVTGQALALAQAMQAGHYRVQPAARRVVLTEAGRAYLREACAAWPAPWSIPFRREELILSALTVLHLYKRDEQYIVRDGKVMVVDEFTGRVMPDRSWGQGVHQMIEHKEGLELSDPRVTLKSISYQRFFKHYLRLAGMTGTAAEIRGELGRVYNLPVVRIPTHRPSRRLHAPDSVYRTMAEKWSAVRERCRELHGRGVPVLIGTRSVAASEELARVLADAALPVVLLNAKQDADEASLIARAGEVGSIMIATNMAGRGTDIPLSAAARQAGGLHVILTERHESARIDRQLEGRSGRQGDPGHTEAILSLEDAVLDSVKNSLWAGPMNTLLAAQGPGWRGLAAHWLRHAQARTERKLARERRAMVSADEELENSLSFSGQGD.

ATP-binding positions include Q113, 131-135, and D539; that span reads GEGKT.

This sequence belongs to the SecA family. In terms of assembly, monomer and homodimer. Part of the essential Sec protein translocation apparatus which comprises SecA, SecYEG and auxiliary proteins SecDF-YajC and YidC.

The protein localises to the cell inner membrane. It localises to the cytoplasm. The catalysed reaction is ATP + H2O + cellular proteinSide 1 = ADP + phosphate + cellular proteinSide 2.. Functionally, part of the Sec protein translocase complex. Interacts with the SecYEG preprotein conducting channel. Has a central role in coupling the hydrolysis of ATP to the transfer of proteins into and across the cell membrane, serving both as a receptor for the preprotein-SecB complex and as an ATP-driven molecular motor driving the stepwise translocation of polypeptide chains across the membrane. The chain is Protein translocase subunit SecA 2 from Bordetella avium (strain 197N).